A 273-amino-acid polypeptide reads, in one-letter code: Dermonecrotic toxin LsaSicTox-alphaIB1ai (273 aa).

His5 is an active-site residue. Mg(2+) contacts are provided by Glu25 and Asp27. The Nucleophile role is filled by His41. Cystine bridges form between Cys45/Cys51 and Cys47/Cys190. Asp85 contacts Mg(2+).

It belongs to the arthropod phospholipase D family. Class II subfamily. It depends on Mg(2+) as a cofactor. Expressed by the venom gland.

The protein resides in the secreted. It catalyses the reaction an N-(acyl)-sphingosylphosphocholine = an N-(acyl)-sphingosyl-1,3-cyclic phosphate + choline. The catalysed reaction is an N-(acyl)-sphingosylphosphoethanolamine = an N-(acyl)-sphingosyl-1,3-cyclic phosphate + ethanolamine. The enzyme catalyses a 1-acyl-sn-glycero-3-phosphocholine = a 1-acyl-sn-glycero-2,3-cyclic phosphate + choline. It carries out the reaction a 1-acyl-sn-glycero-3-phosphoethanolamine = a 1-acyl-sn-glycero-2,3-cyclic phosphate + ethanolamine. Its function is as follows. Dermonecrotic toxins cleave the phosphodiester linkage between the phosphate and headgroup of certain phospholipids (sphingolipid and lysolipid substrates), forming an alcohol (often choline) and a cyclic phosphate. This toxin acts on sphingomyelin (SM). It may also act on ceramide phosphoethanolamine (CPE), lysophosphatidylcholine (LPC) and lysophosphatidylethanolamine (LPE), but not on lysophosphatidylserine (LPS), and lysophosphatidylglycerol (LPG). It acts by transphosphatidylation, releasing exclusively cyclic phosphate products as second products. Induces dermonecrosis, hemolysis, increased vascular permeability, edema, inflammatory response, and platelet aggregation. The sequence is that of Dermonecrotic toxin LsaSicTox-alphaIB1ai from Loxosceles sabina (Tucson recluse spider).